The sequence spans 338 residues: RNA 3'-terminal phosphate cyclase (338 aa).

ATP-binding positions include Q103 and 283–287 (YLADQ). The active-site Tele-AMP-histidine intermediate is H308.

The protein belongs to the RNA 3'-terminal cyclase family. Type 1 subfamily.

Its subcellular location is the cytoplasm. It catalyses the reaction a 3'-end 3'-phospho-ribonucleotide-RNA + ATP = a 3'-end 2',3'-cyclophospho-ribonucleotide-RNA + AMP + diphosphate. In terms of biological role, catalyzes the conversion of 3'-phosphate to a 2',3'-cyclic phosphodiester at the end of RNA. The mechanism of action of the enzyme occurs in 3 steps: (A) adenylation of the enzyme by ATP; (B) transfer of adenylate to an RNA-N3'P to produce RNA-N3'PP5'A; (C) and attack of the adjacent 2'-hydroxyl on the 3'-phosphorus in the diester linkage to produce the cyclic end product. The biological role of this enzyme is unknown but it is likely to function in some aspects of cellular RNA processing. The polypeptide is RNA 3'-terminal phosphate cyclase (Shigella boydii serotype 4 (strain Sb227)).